We begin with the raw amino-acid sequence, 466 residues long: Uronate isomerase (466 aa).

Belongs to the metallo-dependent hydrolases superfamily. Uronate isomerase family.

It carries out the reaction D-glucuronate = D-fructuronate. It catalyses the reaction aldehydo-D-galacturonate = keto-D-tagaturonate. It functions in the pathway carbohydrate metabolism; pentose and glucuronate interconversion. This chain is Uronate isomerase, found in Brucella suis (strain ATCC 23445 / NCTC 10510).